Here is a 125-residue protein sequence, read N- to C-terminus: UPF0102 protein mlr4633 (125 aa).

The protein belongs to the UPF0102 family.

In Mesorhizobium japonicum (strain LMG 29417 / CECT 9101 / MAFF 303099) (Mesorhizobium loti (strain MAFF 303099)), this protein is UPF0102 protein mlr4633.